A 42-amino-acid polypeptide reads, in one-letter code: Photosystem I reaction center subunit IX (42 aa).

Residues 7–27 (YLSVAPVLSTLWFGALAGLLI) traverse the membrane as a helical segment.

It belongs to the PsaJ family.

The protein resides in the plastid. Its subcellular location is the chloroplast thylakoid membrane. In terms of biological role, may help in the organization of the PsaE and PsaF subunits. This Platanus occidentalis (Sycamore) protein is Photosystem I reaction center subunit IX.